Reading from the N-terminus, the 376-residue chain is DNA double-strand break repair protein Mre11 (376 aa).

Positions 5, 7, 46, and 81 each coordinate Mn(2+). Histidine 82 functions as the Proton donor in the catalytic mechanism. Mn(2+) is bound by residues histidine 159, histidine 189, and histidine 191.

It belongs to the MRE11/RAD32 family. Homodimer. Forms a heterotetramer composed of two Mre11 subunits and two Rad50 subunits. It depends on Mn(2+) as a cofactor.

Nuclease activity is regulated by Rad50. Functionally, part of the Rad50/Mre11 complex, which is involved in the early steps of DNA double-strand break (DSB) repair. The complex may facilitate opening of the processed DNA ends to aid in the recruitment of HerA and NurA. Mre11 binds to DSB ends and has both double-stranded 3'-5' exonuclease activity and single-stranded endonuclease activity. The chain is DNA double-strand break repair protein Mre11 from Thermoplasma acidophilum (strain ATCC 25905 / DSM 1728 / JCM 9062 / NBRC 15155 / AMRC-C165).